Here is a 603-residue protein sequence, read N- to C-terminus: DNA mismatch repair protein MutL (603 aa).

The segment covering 337-347 (ISKKQKEDQKS) has biased composition (basic and acidic residues). Residues 337–383 (ISKKQKEDQKSEQIQMSFEENKPVKETPTLFSKPTIPEYVPSDEDAP) are disordered.

This sequence belongs to the DNA mismatch repair MutL/HexB family.

In terms of biological role, this protein is involved in the repair of mismatches in DNA. It is required for dam-dependent methyl-directed DNA mismatch repair. May act as a 'molecular matchmaker', a protein that promotes the formation of a stable complex between two or more DNA-binding proteins in an ATP-dependent manner without itself being part of a final effector complex. The polypeptide is DNA mismatch repair protein MutL (Listeria monocytogenes serotype 4b (strain F2365)).